The following is a 393-amino-acid chain: Synaptic vesicle membrane protein VAT-1 homolog (393 aa).

A disordered region spans residues 1–40 (MSDEREVAEAATGEDASSPPPKTEAASDPQHPAASEGAAA). N-acetylserine is present on S2. Residues S2, S18, S27, S35, and S44 each carry the phosphoserine modification.

It belongs to the zinc-containing alcohol dehydrogenase family. Quinone oxidoreductase subfamily. Expressed in brain. Also expressed in glioblastoma cells.

The protein localises to the cytoplasm. It is found in the mitochondrion outer membrane. Possesses ATPase activity. Plays a part in calcium-regulated keratinocyte activation in epidermal repair mechanisms. Has no effect on cell proliferation. Negatively regulates mitochondrial fusion in cooperation with mitofusin proteins (MFN1-2). This Homo sapiens (Human) protein is Synaptic vesicle membrane protein VAT-1 homolog (VAT1).